Consider the following 150-residue polypeptide: D-aminoacyl-tRNA deacylase (150 aa).

The Gly-cisPro motif, important for rejection of L-amino acids signature appears at 138 to 139 (GP).

This sequence belongs to the DTD family. As to quaternary structure, homodimer.

The protein resides in the cytoplasm. The catalysed reaction is glycyl-tRNA(Ala) + H2O = tRNA(Ala) + glycine + H(+). It carries out the reaction a D-aminoacyl-tRNA + H2O = a tRNA + a D-alpha-amino acid + H(+). In terms of biological role, an aminoacyl-tRNA editing enzyme that deacylates mischarged D-aminoacyl-tRNAs. Also deacylates mischarged glycyl-tRNA(Ala), protecting cells against glycine mischarging by AlaRS. Acts via tRNA-based rather than protein-based catalysis; rejects L-amino acids rather than detecting D-amino acids in the active site. By recycling D-aminoacyl-tRNA to D-amino acids and free tRNA molecules, this enzyme counteracts the toxicity associated with the formation of D-aminoacyl-tRNA entities in vivo and helps enforce protein L-homochirality. The polypeptide is D-aminoacyl-tRNA deacylase (Petrotoga mobilis (strain DSM 10674 / SJ95)).